A 117-amino-acid chain; its full sequence is Protein Rev (117 aa).

Phosphoserine; by host CK2 is present on residues serine 5 and serine 8. The segment at 18-26 is homomultimerization; sequence LIKILYQSN. Residues 24-49 form a disordered region; the sequence is QSNPPPNTEGTTRQARRNRRRRWRAR. The Nuclear localization signal and RNA-binding (RRE) motif lies at 35–51; it reads TRQARRNRRRRWRARQR. Over residues 37–49 the composition is skewed to basic residues; sequence QARRNRRRRWRAR. Positions 74-85 match the Nuclear export signal and binding to XPO1 motif; the sequence is LQLPPLERLTLN. 2 positions are modified to phosphoserine; by host: serine 93 and serine 100. Positions 93 to 105 are enriched in polar residues; it reads SGTQGVGSPQISV. A disordered region spans residues 93-117; sequence SGTQGVGSPQISVESPAILGSGTEE.

The protein belongs to the HIV-1 REV protein family. As to quaternary structure, homomultimer; when bound to the RRE. Multimeric assembly is essential for activity and may involve XPO1. Binds to human KPNB1, XPO1, TNPO1, RANBP5 and IPO7. Interacts with the viral Integrase. Interacts with human KHDRBS1. Interacts with human NAP1; this interaction decreases Rev multimerization and stimulates its activity. Interacts with human DEAD-box helicases DDX3 and DDX24; these interactions may serve for viral RNA export to the cytoplasm and packaging, respectively. Interacts with human PSIP1; this interaction may inhibit HIV-1 DNA integration by promoting dissociation of the Integrase-LEDGF/p75 complex. Asymmetrically arginine dimethylated at one site by host PRMT6. Methylation impairs the RNA-binding activity and export of viral RNA from the nucleus to the cytoplasm. Post-translationally, phosphorylated by protein kinase CK2. Presence of, and maybe binding to the N-terminus of the regulatory beta subunit of CK2 is necessary for CK2-mediated Rev's phosphorylation.

The protein resides in the host nucleus. The protein localises to the host nucleolus. It is found in the host cytoplasm. Functionally, escorts unspliced or incompletely spliced viral pre-mRNAs (late transcripts) out of the nucleus of infected cells. These pre-mRNAs carry a recognition sequence called Rev responsive element (RRE) located in the env gene, that is not present in fully spliced viral mRNAs (early transcripts). This function is essential since most viral proteins are translated from unspliced or partially spliced pre-mRNAs which cannot exit the nucleus by the pathway used by fully processed cellular mRNAs. Rev itself is translated from a fully spliced mRNA that readily exits the nucleus. Rev's nuclear localization signal (NLS) binds directly to KPNB1/Importin beta-1 without previous binding to KPNA1/Importin alpha-1. KPNB1 binds to the GDP bound form of RAN (Ran-GDP) and targets Rev to the nucleus. In the nucleus, the conversion from Ran-GDP to Ran-GTP dissociates Rev from KPNB1 and allows Rev's binding to the RRE in viral pre-mRNAs. Rev multimerization on the RRE via cooperative assembly exposes its nuclear export signal (NES) to the surface. Rev can then form a complex with XPO1/CRM1 and Ran-GTP, leading to nuclear export of the complex. Conversion from Ran-GTP to Ran-GDP mediates dissociation of the Rev/RRE/XPO1/RAN complex, so that Rev can return to the nucleus for a subsequent round of export. Beside KPNB1, also seems to interact with TNPO1/Transportin-1, RANBP5/IPO5 and IPO7/RANBP7 for nuclear import. The nucleoporin-like HRB/RIP is an essential cofactor that probably indirectly interacts with Rev to release HIV RNAs from the perinuclear region to the cytoplasm. This chain is Protein Rev, found in Human immunodeficiency virus type 1 group M subtype A (isolate MAL) (HIV-1).